The following is a 347-amino-acid chain: Isopentenyl-diphosphate delta-isomerase (347 aa).

9–10 (RK) contacts substrate. FMN is bound by residues Ser-67, 68 to 70 (SMT), Ser-98, and Asn-127. Substrate is bound at residue 98–100 (SQR). Gln-162 serves as a coordination point for substrate. Glu-163 lines the Mg(2+) pocket. Residues Lys-194, Thr-224, 274–276 (GIK), and 295–296 (AA) contribute to the FMN site.

This sequence belongs to the IPP isomerase type 2 family. Homooctamer. Dimer of tetramers. FMN serves as cofactor. Requires NADPH as cofactor. It depends on Mg(2+) as a cofactor.

It localises to the cytoplasm. It carries out the reaction isopentenyl diphosphate = dimethylallyl diphosphate. Involved in the biosynthesis of isoprenoids. Catalyzes the 1,3-allylic rearrangement of the homoallylic substrate isopentenyl (IPP) to its allylic isomer, dimethylallyl diphosphate (DMAPP). This Pseudescherichia vulneris (Escherichia vulneris) protein is Isopentenyl-diphosphate delta-isomerase.